Reading from the N-terminus, the 120-residue chain is Large ribosomal subunit protein uL18 (120 aa).

Belongs to the universal ribosomal protein uL18 family. In terms of assembly, part of the 50S ribosomal subunit; part of the 5S rRNA/L5/L18/L25 subcomplex. Contacts the 5S and 23S rRNAs.

Functionally, this is one of the proteins that bind and probably mediate the attachment of the 5S RNA into the large ribosomal subunit, where it forms part of the central protuberance. The sequence is that of Large ribosomal subunit protein uL18 from Chloroflexus aurantiacus (strain ATCC 29364 / DSM 637 / Y-400-fl).